Reading from the N-terminus, the 376-residue chain is Carbamoyl phosphate synthase small chain (376 aa).

Residues 1 to 187 (MKALLVLEDG…AEDGSYAWRG (187 aa)) form a CPSase region. L-glutamine contacts are provided by Ser-45, Gly-239, and Gly-241. Residues 191–376 (PLLVYDFGIK…RKIIGESAGA (186 aa)) enclose the Glutamine amidotransferase type-1 domain. The Nucleophile role is filled by Cys-266. Leu-267, Gln-270, Asn-308, Gly-310, and Phe-311 together coordinate L-glutamine. Active-site residues include His-349 and Glu-351.

This sequence belongs to the CarA family. In terms of assembly, composed of two chains; the small (or glutamine) chain promotes the hydrolysis of glutamine to ammonia, which is used by the large (or ammonia) chain to synthesize carbamoyl phosphate. Tetramer of heterodimers (alpha,beta)4.

It carries out the reaction hydrogencarbonate + L-glutamine + 2 ATP + H2O = carbamoyl phosphate + L-glutamate + 2 ADP + phosphate + 2 H(+). The enzyme catalyses L-glutamine + H2O = L-glutamate + NH4(+). It participates in amino-acid biosynthesis; L-arginine biosynthesis; carbamoyl phosphate from bicarbonate: step 1/1. Its pathway is pyrimidine metabolism; UMP biosynthesis via de novo pathway; (S)-dihydroorotate from bicarbonate: step 1/3. In terms of biological role, small subunit of the glutamine-dependent carbamoyl phosphate synthetase (CPSase). CPSase catalyzes the formation of carbamoyl phosphate from the ammonia moiety of glutamine, carbonate, and phosphate donated by ATP, constituting the first step of 2 biosynthetic pathways, one leading to arginine and/or urea and the other to pyrimidine nucleotides. The small subunit (glutamine amidotransferase) binds and cleaves glutamine to supply the large subunit with the substrate ammonia. This Desulfovibrio desulfuricans (strain ATCC 27774 / DSM 6949 / MB) protein is Carbamoyl phosphate synthase small chain.